A 148-amino-acid chain; its full sequence is D-aminoacyl-tRNA deacylase (148 aa).

Positions 137–138 (GP) match the Gly-cisPro motif, important for rejection of L-amino acids motif.

Belongs to the DTD family. As to quaternary structure, homodimer.

It is found in the cytoplasm. It catalyses the reaction glycyl-tRNA(Ala) + H2O = tRNA(Ala) + glycine + H(+). The enzyme catalyses a D-aminoacyl-tRNA + H2O = a tRNA + a D-alpha-amino acid + H(+). Functionally, an aminoacyl-tRNA editing enzyme that deacylates mischarged D-aminoacyl-tRNAs. Also deacylates mischarged glycyl-tRNA(Ala), protecting cells against glycine mischarging by AlaRS. Acts via tRNA-based rather than protein-based catalysis; rejects L-amino acids rather than detecting D-amino acids in the active site. By recycling D-aminoacyl-tRNA to D-amino acids and free tRNA molecules, this enzyme counteracts the toxicity associated with the formation of D-aminoacyl-tRNA entities in vivo and helps enforce protein L-homochirality. The sequence is that of D-aminoacyl-tRNA deacylase from Latilactobacillus sakei subsp. sakei (strain 23K) (Lactobacillus sakei subsp. sakei).